A 371-amino-acid chain; its full sequence is Ferrochelatase (371 aa).

Positions 218 and 299 each coordinate Fe cation.

This sequence belongs to the ferrochelatase family.

It localises to the cytoplasm. It catalyses the reaction heme b + 2 H(+) = protoporphyrin IX + Fe(2+). It functions in the pathway porphyrin-containing compound metabolism; protoheme biosynthesis; protoheme from protoporphyrin-IX: step 1/1. Catalyzes the ferrous insertion into protoporphyrin IX. In Cupriavidus metallidurans (strain ATCC 43123 / DSM 2839 / NBRC 102507 / CH34) (Ralstonia metallidurans), this protein is Ferrochelatase.